The sequence spans 358 residues: C-X-C chemokine receptor type 4-A (358 aa).

Residues 1 to 25 (MDGFSGGIDINIFDGNSTENGSGDF) form an important for chemokine binding and signaling region. Residues 1–44 (MDGFSGGIDINIFDGNSTENGSGDFEDFIEPCFMHENSDFNRIF) are Extracellular-facing. N-linked (GlcNAc...) asparagine glycans are attached at residues Asn-16 and Asn-20. 2 disulfides stabilise this stretch: Cys-32-Cys-281 and Cys-113-Cys-190. The chain crosses the membrane as a helical span at residues 45-67 (LPTIYSFIFLLGIIGNGLVVVVM). Residues 68 to 81 (GYQKKSRTMTDKYR) are Cytoplasmic-facing. A helical membrane pass occupies residues 82–103 (LHLSVADLLFVFTLPFWSVDAA). Positions 98 to 101 (WSVD) are chemokine binding. At 104 to 114 (IGWYFKEFLCK) the chain is on the extracellular side. Residues 115-134 (AVHVIYTVNLYSSVLILAFI) traverse the membrane as a helical segment. Positions 117 to 121 (HVIYT) are chemokine binding. The Cytoplasmic segment spans residues 135–158 (SLDRYLAIVHATNSQGSRKMLADK). The tract at residues 139 to 151 (YLAIVHATNSQGS) is involved in dimerization; when bound to chemokine. The chain crosses the membrane as a helical span at residues 159–178 (VVYAGVWLPALLLTVPDLVF). Over 179 to 202 (ARVSDENGQFVCDRIYPIENRETW) the chain is Extracellular. Residues 190–194 (CDRIY) are chemokine binding, important for signaling. Residues 203–223 (TVGFRFLHITVGLILPGLIIL) traverse the membrane as a helical segment. Over 224–248 (ICYCVIISKLSHSKGHQKRKALKTT) the chain is Cytoplasmic. Residues 249–268 (VILILAFFACWLPYYVCLTT) traverse the membrane as a helical segment. Over 269–289 (DTFMLLGLVKGDCIWENTLHM) the chain is Extracellular. Residues 290 to 309 (AISITEALAFFHCCLNPILY) traverse the membrane as a helical segment. Topologically, residues 310 to 358 (AFLGAKFKTSAQNAFTSVSRGSSLKILSKKRAGLSSVSTESESSSFHSS) are cytoplasmic. Residues 338-358 (KKRAGLSSVSTESESSSFHSS) form a disordered region. The span at 344–358 (SSVSTESESSSFHSS) shows a compositional bias: low complexity.

It belongs to the G-protein coupled receptor 1 family. Monomer. Can form dimers. In terms of processing, sulfation is required for efficient binding of cxcl12/sdf-1alpha and promotes its dimerization. O- and N-glycosylated. In terms of tissue distribution, highly expressed in the embryonic nervous system including forebrain, hindbrain and sensory organs (including eye), and in neural crest cells. Also expressed in the dorsal lateral plate, the first site of definitive hematopoiesis in the embryo. Appears in migrating presumptive primordial germ cells (pPGCs) from stage 24. Expressed in the epidermis at stage 40. In the adult, highly expressed in the spleen with lower levels of expression in the liver and very low levels in kidney, heart, skin and brain.

It is found in the cell membrane. The protein resides in the cytoplasm. The protein localises to the nucleus. Its subcellular location is the early endosome. It localises to the late endosome. It is found in the lysosome. In terms of biological role, receptor for the C-X-C chemokine cxcl12/sdf-1. Transduces a signal by increasing the intracellular level of calcium ions. Signaling with cxcl12/sdf-1 mediates the directional movement of mesodermal cells during gastrulation. May play a role in the migration of embryonic presumptive primordial germ cells (pPGCs). May also be involved in regulating the migration of hematopoietic stem cells into the larval liver. This Xenopus laevis (African clawed frog) protein is C-X-C chemokine receptor type 4-A (cxcr4-a).